We begin with the raw amino-acid sequence, 408 residues long: FAD-dependent monooxygenase nscC (408 aa).

An N-terminal signal peptide occupies residues 1 to 20 (MAPPLPILIIGAGISGLTTA). The FAD site is built by Glu34 and Ala45. 2 N-linked (GlcNAc...) asparagine glycosylation sites follow: Asn91 and Asn103. Residue Arg119 coordinates FAD. N-linked (GlcNAc...) asparagine glycosylation is found at Asn170 and Asn231. Residues Asp328 and Gly341 each contribute to the FAD site.

It belongs to the paxM FAD-dependent monooxygenase family. It depends on FAD as a cofactor.

It participates in secondary metabolite biosynthesis. In terms of biological role, FAD-dependent monooxygenase; part of the gene cluster that mediates the biosynthesis of neosartoricin, a prenylated anthracenone that exhibits T-cell antiproliferative activity, suggestive of a physiological role as an immunosuppressive agent. The non-reducing polyketide synthase nscA probably synthesizes and cyclizes the decaketide backbone. The hydrolase nscB then mediates the product release through hydrolysis followed by spontaneous decarboxylation. The prenyltransferase nscD catalyzes the addition of the dimethylallyl group to the aromatic C5. The FAD-dependent monooxygenase nscC is then responsible for the stereospecific hydroxylation at C2. There is no gene encoding O-acetyltransferase in the nsc gene cluster; thus, the last step of 2-O-acetylation leading to neosartoricin may be catalyzed by an unidentified O-acetyltransferase. This chain is FAD-dependent monooxygenase nscC, found in Neosartorya fischeri (strain ATCC 1020 / DSM 3700 / CBS 544.65 / FGSC A1164 / JCM 1740 / NRRL 181 / WB 181) (Aspergillus fischerianus).